The primary structure comprises 196 residues: Pyridoxal 5'-phosphate synthase subunit PdxT (196 aa).

Residue 47–49 (GES) coordinates L-glutamine. The active-site Nucleophile is the Cys-79. Residues Arg-106 and 134 to 135 (IR) each bind L-glutamine. Active-site charge relay system residues include His-170 and Glu-172.

This sequence belongs to the glutaminase PdxT/SNO family. As to quaternary structure, in the presence of PdxS, forms a dodecamer of heterodimers. Only shows activity in the heterodimer.

The enzyme catalyses aldehydo-D-ribose 5-phosphate + D-glyceraldehyde 3-phosphate + L-glutamine = pyridoxal 5'-phosphate + L-glutamate + phosphate + 3 H2O + H(+). The catalysed reaction is L-glutamine + H2O = L-glutamate + NH4(+). It functions in the pathway cofactor biosynthesis; pyridoxal 5'-phosphate biosynthesis. Its function is as follows. Catalyzes the hydrolysis of glutamine to glutamate and ammonia as part of the biosynthesis of pyridoxal 5'-phosphate. The resulting ammonia molecule is channeled to the active site of PdxS. The chain is Pyridoxal 5'-phosphate synthase subunit PdxT from Bacillus anthracis (strain A0248).